The sequence spans 736 residues: 1,4-alpha-glucan branching enzyme GlgB (736 aa).

D415 acts as the Nucleophile in catalysis. The active-site Proton donor is the E470.

It belongs to the glycosyl hydrolase 13 family. GlgB subfamily. In terms of assembly, monomer.

It carries out the reaction Transfers a segment of a (1-&gt;4)-alpha-D-glucan chain to a primary hydroxy group in a similar glucan chain.. It functions in the pathway glycan biosynthesis; glycogen biosynthesis. In terms of biological role, catalyzes the formation of the alpha-1,6-glucosidic linkages in glycogen by scission of a 1,4-alpha-linked oligosaccharide from growing alpha-1,4-glucan chains and the subsequent attachment of the oligosaccharide to the alpha-1,6 position. This Burkholderia orbicola (strain AU 1054) protein is 1,4-alpha-glucan branching enzyme GlgB.